Here is a 312-residue protein sequence, read N- to C-terminus: Protoheme IX farnesyltransferase 1 (312 aa).

9 consecutive transmembrane segments (helical) span residues 21 to 41, 53 to 73, 105 to 125, 127 to 147, 156 to 176, 182 to 202, 225 to 245, 246 to 266, and 292 to 312; these read GVLAAYLALTKPRVIELLLVT, IPSPWLVLVTLAGGAMSAGSA, SALVFGIVLGVVSFAVLALGA, LLAAVLSLAAILFYVFVYTLV, IVWGGAAGCMPVVIGWAAVTG, ALVMFGVVFLWTPPHFWSLAM, VSARILVYSWATVACTLLLVP, ATSWVYVAFAVLAGAAFLIVA, and LALLFVAIAVDSAVGLPSFVA.

It belongs to the UbiA prenyltransferase family. Protoheme IX farnesyltransferase subfamily.

Its subcellular location is the cell membrane. The catalysed reaction is heme b + (2E,6E)-farnesyl diphosphate + H2O = Fe(II)-heme o + diphosphate. Its pathway is porphyrin-containing compound metabolism; heme O biosynthesis; heme O from protoheme: step 1/1. In terms of biological role, converts heme B (protoheme IX) to heme O by substitution of the vinyl group on carbon 2 of heme B porphyrin ring with a hydroxyethyl farnesyl side group. In Saccharopolyspora erythraea (strain ATCC 11635 / DSM 40517 / JCM 4748 / NBRC 13426 / NCIMB 8594 / NRRL 2338), this protein is Protoheme IX farnesyltransferase 1.